We begin with the raw amino-acid sequence, 201 residues long: Recombination protein RecR (201 aa).

The C4-type zinc-finger motif lies at 57-72 (CADCRTFTEQDICTIC). The Toprim domain maps to 81–176 (GQICVVESPA…VASRIAHGVP (96 aa)).

The protein belongs to the RecR family.

In terms of biological role, may play a role in DNA repair. It seems to be involved in an RecBC-independent recombinational process of DNA repair. It may act with RecF and RecO. The sequence is that of Recombination protein RecR from Serratia proteamaculans (strain 568).